The following is a 515-amino-acid chain: Phospholipase A1-Igamma1, chloroplastic (515 aa).

The transit peptide at 1-44 (MATIPSHNLRPHTTNQRTQYSLSFRPHFSRSTLITFPARSSPAR) directs the protein to the chloroplast. The short motif at 301-305 (GHSLG) is the GXSXG element. The Acyl-ester intermediate role is filled by Ser-303. Catalysis depends on charge relay system residues Asp-366 and His-422.

The protein belongs to the AB hydrolase superfamily. Lipase family. As to expression, ubiquitous. Highly expressed in leaves.

The protein resides in the plastid. The protein localises to the chloroplast. The enzyme catalyses 1,2-dihexadecanoyl-sn-glycero-3-phosphocholine + H2O = 2-hexadecanoyl-sn-glycero-3-phosphocholine + hexadecanoate + H(+). The catalysed reaction is a 1,2-diacyl-3-O-(beta-D-galactosyl)-sn-glycerol + H2O = an acyl-3-O-(beta-D-galactosyl)-sn-glycerol + a fatty acid + H(+). It catalyses the reaction a 1,2-diacyl-3-O-[alpha-D-galactosyl-(1-&gt;6)-beta-D-galactosyl]-sn-glycerol + H2O = acyl-3-O-[alpha-D-galactosyl-(1-&gt;6)-beta-D-galactosyl]-sn-glycerol + a fatty acid + H(+). In terms of biological role, acylhydrolase with a broad specificity. Catalyzes the hydrolysis of phosphatidylcholine at the sn-1 position. Moderate activity toward phosphatidylcholine (PC), monogalactosyldiacylglycerol (MGDG), digalactosyldiacylglycerol (DGDG) and triacylglycerol (TAG). May display dual sn-1/sn-2 substrate specificity. Could be involved in early wound response. This chain is Phospholipase A1-Igamma1, chloroplastic, found in Arabidopsis thaliana (Mouse-ear cress).